Reading from the N-terminus, the 63-residue chain is 2-hydroxymuconate tautomerase (63 aa).

Proline 2 acts as the Proton acceptor; via imino nitrogen in catalysis.

It belongs to the 4-oxalocrotonate tautomerase family. Homohexamer.

It catalyses the reaction (2Z,4E)-2-hydroxyhexa-2,4-dienedioate = (3E)-2-oxohex-3-enedioate. The protein operates within aromatic compound metabolism; salicylate degradation. Catalyzes the ketonization of 2-hydroxymuconate stereoselectively to yield 2-oxo-3-hexenedioate. The protein is 2-hydroxymuconate tautomerase (nahJ) of Stutzerimonas stutzeri (Pseudomonas stutzeri).